We begin with the raw amino-acid sequence, 482 residues long: ATP synthase subunit beta (482 aa).

161 to 168 is an ATP binding site; the sequence is GGAGVGKT.

This sequence belongs to the ATPase alpha/beta chains family. F-type ATPases have 2 components, CF(1) - the catalytic core - and CF(0) - the membrane proton channel. CF(1) has five subunits: alpha(3), beta(3), gamma(1), delta(1), epsilon(1). CF(0) has three main subunits: a(1), b(2) and c(9-12). The alpha and beta chains form an alternating ring which encloses part of the gamma chain. CF(1) is attached to CF(0) by a central stalk formed by the gamma and epsilon chains, while a peripheral stalk is formed by the delta and b chains.

It localises to the cell inner membrane. The enzyme catalyses ATP + H2O + 4 H(+)(in) = ADP + phosphate + 5 H(+)(out). Functionally, produces ATP from ADP in the presence of a proton gradient across the membrane. The catalytic sites are hosted primarily by the beta subunits. The protein is ATP synthase subunit beta of Anaeromyxobacter dehalogenans (strain 2CP-C).